Here is a 446-residue protein sequence, read N- to C-terminus: Chromosomal replication initiator protein DnaA (446 aa).

A domain I, interacts with DnaA modulators region spans residues 1–81; sequence MENISDLWNS…AKLAIRFIIP (81 aa). The tract at residues 81-109 is domain II; it reads PQSQAEEDIDLPSVKQKHAHDESNHLPQS. The segment at 110 to 326 is domain III, AAA+ region; the sequence is MLNPKYTFDT…GALIRVVAYS (217 aa). ATP is bound by residues Gly154, Gly156, Lys157, and Thr158. The tract at residues 327–446 is domain IV, binds dsDNA; it reads SLINKDMNAD…HVEEVKDILK (120 aa).

The protein belongs to the DnaA family. Oligomerizes as a right-handed, spiral filament on DNA at oriC.

Its subcellular location is the cytoplasm. Its function is as follows. Plays an essential role in the initiation and regulation of chromosomal replication. ATP-DnaA binds to the origin of replication (oriC) to initiate formation of the DNA replication initiation complex once per cell cycle. Binds the DnaA box (a 9 base pair repeat at the origin) and separates the double-stranded (ds)DNA. Forms a right-handed helical filament on oriC DNA; dsDNA binds to the exterior of the filament while single-stranded (ss)DNA is stabiized in the filament's interior. The ATP-DnaA-oriC complex binds and stabilizes one strand of the AT-rich DNA unwinding element (DUE), permitting loading of DNA polymerase. After initiation quickly degrades to an ADP-DnaA complex that is not apt for DNA replication. Binds acidic phospholipids. The polypeptide is Chromosomal replication initiator protein DnaA (Bacillus mycoides (strain KBAB4) (Bacillus weihenstephanensis)).